We begin with the raw amino-acid sequence, 386 residues long: Ribosomal RNA small subunit methyltransferase H (386 aa).

S-adenosyl-L-methionine contacts are provided by residues glycine 97–histidine 99, aspartate 116, tyrosine 143, aspartate 167, and glutamine 174.

This sequence belongs to the methyltransferase superfamily. RsmH family.

The protein localises to the cytoplasm. It carries out the reaction cytidine(1402) in 16S rRNA + S-adenosyl-L-methionine = N(4)-methylcytidine(1402) in 16S rRNA + S-adenosyl-L-homocysteine + H(+). In terms of biological role, specifically methylates the N4 position of cytidine in position 1402 (C1402) of 16S rRNA. This is Ribosomal RNA small subunit methyltransferase H from Mycolicibacterium paratuberculosis (strain ATCC BAA-968 / K-10) (Mycobacterium paratuberculosis).